Here is a 151-residue protein sequence, read N- to C-terminus: Regulatory protein RecX (151 aa).

The protein belongs to the RecX family.

Its subcellular location is the cytoplasm. Its function is as follows. Modulates RecA activity. This Prosthecochloris aestuarii (strain DSM 271 / SK 413) protein is Regulatory protein RecX.